A 1680-amino-acid polypeptide reads, in one-letter code: Alpha-protein kinase 3 (1680 aa).

Residues 1–37 (MGSRRAAGRGWGLGGRAGAGGDSEDDGPVWTPGPASR) form a disordered region. The segment covering 9–21 (RGWGLGGRAGAGG) has biased composition (gly residues). An Ig-like 1 domain is found at 77–173 (PLFETTLKSR…SGVLEVGTMT (97 aa)). Ser-229 is modified (phosphoserine). Disordered regions lie at residues 237-288 (STPV…NGED), 302-759 (ELGP…CPRE), 785-950 (SEEA…GTRS), 1078-1128 (EGSA…LTGL), and 1147-1244 (PKVR…QRKA). The span at 320-337 (KDEESKPGEQKLELEKAE) shows a compositional bias: basic and acidic residues. Residues 339–353 (SQCSSENVVPSTDKP) show a composition bias toward polar residues. Over residues 402 to 426 (APAPAPVPAPALAPAPVPVPAPTPV) the composition is skewed to pro residues. Over residues 514–532 (ESTTTSLSSQTSESMAQSL) the composition is skewed to low complexity. 2 stretches are compositionally biased toward polar residues: residues 557 to 566 (SPLQGQTSHK) and 731 to 744 (ETQSEQLSMASLSS). Residues 785-796 (SEEAAFRSHEDG) are compositionally biased toward basic and acidic residues. Polar residues predominate over residues 917–932 (SPTQSHPPEAMATSSE). Composition is skewed to basic and acidic residues over residues 1087–1111 (ERTSQESDKKGLLGEVEGHTVESRT) and 1151–1165 (AGSDGEANKAEERES). At Ser-1199 the chain carries Phosphoserine. Residues 1231 to 1244 (DEGKQEALAKQRKA) are compositionally biased toward basic and acidic residues. Residues 1251 to 1339 (PQVIRKIRVE…GSASTDFCLS (89 aa)) form the Ig-like 2 domain. Cys-1273 and Cys-1323 are oxidised to a cystine. Positions 1367–1600 (KGLADSGCWG…YCDMLGLKPL (234 aa)) constitute an Alpha-type protein kinase domain. The tract at residues 1603-1680 (PEAAHPQAKA…DGSSKAQSMR (78 aa)) is disordered. 2 stretches are compositionally biased toward polar residues: residues 1639–1660 (PQGSRKSAPSSRATLQASQAAT) and 1671–1680 (DGSSKAQSMR).

It belongs to the protein kinase superfamily. Alpha-type protein kinase family. ALPK subfamily. Expressed in the heart and skeletal muscle of adult mice.

The protein localises to the nucleus. The enzyme catalyses L-seryl-[protein] + ATP = O-phospho-L-seryl-[protein] + ADP + H(+). The catalysed reaction is L-threonyl-[protein] + ATP = O-phospho-L-threonyl-[protein] + ADP + H(+). Involved in cardiomyocyte differentiation. This chain is Alpha-protein kinase 3, found in Mus musculus (Mouse).